Here is a 230-residue protein sequence, read N- to C-terminus: Demethylmenaquinone methyltransferase (230 aa).

S-adenosyl-L-methionine-binding positions include Thr-57, Asp-77, 101–102 (DI), and Ser-118.

Belongs to the class I-like SAM-binding methyltransferase superfamily. MenG/UbiE family.

It carries out the reaction a 2-demethylmenaquinol + S-adenosyl-L-methionine = a menaquinol + S-adenosyl-L-homocysteine + H(+). It functions in the pathway quinol/quinone metabolism; menaquinone biosynthesis; menaquinol from 1,4-dihydroxy-2-naphthoate: step 2/2. In terms of biological role, methyltransferase required for the conversion of demethylmenaquinol (DMKH2) to menaquinol (MKH2). The sequence is that of Demethylmenaquinone methyltransferase from Chlamydia felis (strain Fe/C-56) (Chlamydophila felis).